The primary structure comprises 397 residues: 1-deoxy-D-xylulose 5-phosphate reductoisomerase (397 aa).

T12, G13, S14, I15, G38, K39, N40, and N126 together coordinate NADPH. Position 127 (K127) interacts with 1-deoxy-D-xylulose 5-phosphate. E128 is a binding site for NADPH. D152 is a binding site for Mn(2+). 4 residues coordinate 1-deoxy-D-xylulose 5-phosphate: S153, E154, S188, and H211. A Mn(2+)-binding site is contributed by E154. G217 is an NADPH binding site. 1-deoxy-D-xylulose 5-phosphate is bound by residues S224, N229, K230, and E233. E233 is a binding site for Mn(2+).

Belongs to the DXR family. The cofactor is Mg(2+). Mn(2+) serves as cofactor.

The catalysed reaction is 2-C-methyl-D-erythritol 4-phosphate + NADP(+) = 1-deoxy-D-xylulose 5-phosphate + NADPH + H(+). Its pathway is isoprenoid biosynthesis; isopentenyl diphosphate biosynthesis via DXP pathway; isopentenyl diphosphate from 1-deoxy-D-xylulose 5-phosphate: step 1/6. Catalyzes the NADPH-dependent rearrangement and reduction of 1-deoxy-D-xylulose-5-phosphate (DXP) to 2-C-methyl-D-erythritol 4-phosphate (MEP). The polypeptide is 1-deoxy-D-xylulose 5-phosphate reductoisomerase (Haemophilus influenzae (strain ATCC 51907 / DSM 11121 / KW20 / Rd)).